We begin with the raw amino-acid sequence, 164 residues long: Sorting nexin-3 (164 aa).

The 124-residue stretch at Glu40–Gln163 folds into the PX domain. Arg83, Ser85, Lys114, Arg120, and Arg129 together coordinate a 1,2-diacyl-sn-glycero-3-phospho-(1D-myo-inositol-3-phosphate).

It belongs to the sorting nexin family.

The protein localises to the cytoplasm. It is found in the golgi apparatus membrane. Its subcellular location is the prevacuolar compartment membrane. Required for retention of late Golgi membrane proteins. Component of the retrieval machinery that functions by direct interaction with the cytosolic tails of certain TGN membrane proteins during the sorting/budding process at the prevacuolar compartment. Binds phosphatidylinositol 3-phosphate (PtdIns(P3)). This Kluyveromyces lactis (strain ATCC 8585 / CBS 2359 / DSM 70799 / NBRC 1267 / NRRL Y-1140 / WM37) (Yeast) protein is Sorting nexin-3 (SNX3).